The chain runs to 227 residues: Deoxyribose-phosphate aldolase (227 aa).

The Proton donor/acceptor role is filled by Asp98. Lys161 functions as the Schiff-base intermediate with acetaldehyde in the catalytic mechanism. Lys191 functions as the Proton donor/acceptor in the catalytic mechanism.

It belongs to the DeoC/FbaB aldolase family. DeoC type 1 subfamily.

The protein localises to the cytoplasm. It carries out the reaction 2-deoxy-D-ribose 5-phosphate = D-glyceraldehyde 3-phosphate + acetaldehyde. It functions in the pathway carbohydrate degradation; 2-deoxy-D-ribose 1-phosphate degradation; D-glyceraldehyde 3-phosphate and acetaldehyde from 2-deoxy-alpha-D-ribose 1-phosphate: step 2/2. In terms of biological role, catalyzes a reversible aldol reaction between acetaldehyde and D-glyceraldehyde 3-phosphate to generate 2-deoxy-D-ribose 5-phosphate. The polypeptide is Deoxyribose-phosphate aldolase (Frankia alni (strain DSM 45986 / CECT 9034 / ACN14a)).